Here is a 140-residue protein sequence, read N- to C-terminus: MATPIRTVRQLSESLCIPYIDVLLPCNFCNYFLSNAEKLLFDHFDLHLVWRDNLVFGCCQGCARTVSLLEFVLYYQESYEVPEIEEILDRPLLQIELRCVTCIKKLSVAEKLEVVSNGERVHRVRNRLKAKCSLCRLYAI.

2 zinc fingers span residues 26-62 and 99-135; these read CNFC…CQGC and CVTC…CSLC.

This sequence belongs to the papillomaviridae E6 protein family. As to quaternary structure, forms homodimers. Interacts with ubiquitin-protein ligase UBE3A/E6-AP; this interaction stimulates UBE3A ubiquitin activity. Interacts with host BAK1.

It localises to the host cytoplasm. The protein localises to the host nucleus. In terms of biological role, plays a major role in the induction and maintenance of cellular transformation. E6 associates with host UBE3A/E6-AP ubiquitin-protein ligase and modulates its activity. Protects host keratinocytes from apoptosis by mediating the degradation of host BAK1. May also inhibit host immune response. The protein is Protein E6 of Human papillomavirus type 1 (Human papillomavirus type 1a).